The chain runs to 100 residues: Nucleoid-associated protein HPG27_32 (100 aa).

It belongs to the YbaB/EbfC family. In terms of assembly, homodimer.

The protein localises to the cytoplasm. It is found in the nucleoid. In terms of biological role, binds to DNA and alters its conformation. May be involved in regulation of gene expression, nucleoid organization and DNA protection. The polypeptide is Nucleoid-associated protein HPG27_32 (Helicobacter pylori (strain G27)).